The following is a 396-amino-acid chain: Alanine racemase (396 aa).

Residue lysine 46 is the Proton acceptor; specific for D-alanine of the active site. Residue lysine 46 is modified to N6-(pyridoxal phosphate)lysine. Arginine 145 contributes to the substrate binding site. Tyrosine 280 serves as the catalytic Proton acceptor; specific for L-alanine. Methionine 328 serves as a coordination point for substrate.

It belongs to the alanine racemase family. The cofactor is pyridoxal 5'-phosphate.

It catalyses the reaction L-alanine = D-alanine. The protein operates within amino-acid biosynthesis; D-alanine biosynthesis; D-alanine from L-alanine: step 1/1. Catalyzes the interconversion of L-alanine and D-alanine. May also act on other amino acids. The sequence is that of Alanine racemase (alr) from Brucella suis (strain ATCC 23445 / NCTC 10510).